The sequence spans 364 residues: A-type ATP synthase subunit C (364 aa).

The protein belongs to the V-ATPase V0D/AC39 subunit family. In terms of assembly, has multiple subunits with at least A(3), B(3), C, D, E, F, H, I and proteolipid K(x).

The protein resides in the cell membrane. Its function is as follows. Component of the A-type ATP synthase that produces ATP from ADP in the presence of a proton gradient across the membrane. The protein is A-type ATP synthase subunit C of Desulfurococcus sp. (strain SY).